The following is a 1140-amino-acid chain: MGEIYSPSQSKGFNQPYGYPMNCNLSRVFMEMTEEDRKCLEERKYWCFLLSSITTFCASMILVVIWRVVTHLCCQRREKEFVEPIPAPEAVQINMNGSKHAPSETDPFLKQQEEKHLGWMTEAKDWAGELISGQSLTGRFLVLLVFILSIGSLIIYFYDASFQNFQVETCIPWQDSPSQQIDLGFNIFFLVYFFIRFIAASDKVWFLLEMYSWIDFFTIPPSFVAIYLQRNWLGFRFLRALRLMTVPDILQYLNILKTSSSIRLTQLVTIFVAVCLTGAGLVHLLENSGDFFKGFINPHRITYADSVYFVLVTMSTVGYGDIYCTTLCGRLFMIFFILFGLAMFASYVPEIADLIGNRQKYGGEYKGEHGKKHIVVCGHITYDSVSHFLQDFLHEDRDDVDVEVVFLHRVVPDLELEGLFKRHFTKVEFFTGTVMDSLDLSRVKIGDADACLVLANKYSTNPDAEDAANIMRVISIKNYSSDIRVIVQLMQYHNKAYLLNIPSWDWKRGDDVICLAELKLGFIAQSCLAPGFSTMMANLFAMRSFKTSQTTPDWLNLYLCGAGMEMYTDTLSHSFVGMTFPEAVDLLFNRLGLLLLAIELKDEENKECNIAINPGPHIVIQPQTQGFFIAQSADEVKRAFFWCKQCHDDIKDVSLIKKCKCKNLALFRRNTKHSTAARARATDVLQQFQPQAPAGPMGHLGQQVQLRMINQQSSTSDTHLNTKSLRFAYEIKKLMPSSGGRRNSMSIPPDGRGVDFSKDFEQQFQDMKYDSTGMFHWCPSRNLEDCVLERHQAAMTVLNGHVVVCLFADQDSPLIGLRNFIMPLRSSNFHYHELKHVVIVGDLEYLRKEWKTLYNLPKISILNGSPLSRADLRAVNINLCDMCVIISARVPNTEDTTLADKEAILASLNIKAMQFDDTLGFFPMRHQTGDRSPLGSPISMQKKGAKFGTNVPMITELVNDSNVQFLDQDDDDDPDTELYLTQPFACGTAFAISVLDSLMSTTYFNDSALTLIRTLVTGGATPELELILAEGAGLRGGYSTPETLSNRDRCRIAQISLQDNPYDGVVHNTTYGAMFTIALRRYGQLCIGLYRLHDQDNPDSMKRYVITNPPAELRIKNTDYVYVLEQFDPGLEYEPGKRHF.

At 1–44 the chain is on the extracellular side; it reads MGEIYSPSQSKGFNQPYGYPMNCNLSRVFMEMTEEDRKCLEERK. The helical transmembrane segment at 45-65 threads the bilayer; the sequence is YWCFLLSSITTFCASMILVVI. Topologically, residues 66–139 are cytoplasmic; the sequence is WRVVTHLCCQ…LISGQSLTGR (74 aa). Residues 140 to 161 traverse the membrane as a helical segment; sequence FLVLLVFILSIGSLIIYFYDAS. At 162 to 178 the chain is on the extracellular side; it reads FQNFQVETCIPWQDSPS. Residues 179–199 form a helical membrane-spanning segment; the sequence is QQIDLGFNIFFLVYFFIRFIA. Over 200–203 the chain is Cytoplasmic; that stretch reads ASDK. Residues 204 to 224 traverse the membrane as a helical segment; that stretch reads VWFLLEMYSWIDFFTIPPSFV. Over 225 to 228 the chain is Extracellular; sequence AIYL. A helical; Voltage-sensor membrane pass occupies residues 229-249; sequence QRNWLGFRFLRALRLMTVPDI. The Cytoplasmic portion of the chain corresponds to 250–264; that stretch reads LQYLNILKTSSSIRL. The helical transmembrane segment at 265–285 threads the bilayer; it reads TQLVTIFVAVCLTGAGLVHLL. At 286–299 the chain is on the extracellular side; the sequence is ENSGDFFKGFINPH. The pore-forming intramembrane region spans 300–322; the sequence is RITYADSVYFVLVTMSTVGYGDI. The Selectivity for potassium motif lies at 316 to 319; that stretch reads TVGY. Topologically, residues 323 to 331 are extracellular; it reads YCTTLCGRL. Residues 332-352 traverse the membrane as a helical segment; sequence FMIFFILFGLAMFASYVPEIA. Topologically, residues 353 to 1140 are cytoplasmic; that stretch reads DLIGNRQKYG…LEYEPGKRHF (788 aa). Positions 371-514 constitute an RCK N-terminal 1 domain; that stretch reads KKHIVVCGHI…DWKRGDDVIC (144 aa). The tract at residues 520 to 540 is segment S7; sequence LGFIAQSCLAPGFSTMMANLF. Positions 578–598 are segment S8; sequence MTFPEAVDLLFNRLGLLLLAI. Residues 797 to 817 form a segment S9 region; that stretch reads VLNGHVVVCLFADQDSPLIGL. Residues 799–953 enclose the RCK N-terminal 2 domain; the sequence is NGHVVVCLFA…GAKFGTNVPM (155 aa). A Calcium bowl motif is present at residues 955–977; the sequence is TELVNDSNVQFLDQDDDDDPDTE. Ca(2+) is bound by residues Q964, D967, D970, and D972. The segment at 984-1004 is segment S10; that stretch reads FACGTAFAISVLDSLMSTTYF.

The protein belongs to the potassium channel family. Calcium-activated (TC 1.A.1.3) subfamily. Slo sub-subfamily. Homotetramer; which constitutes the calcium-activated potassium channel. In terms of processing, phosphorylated. As to expression, expressed in synaptic regions of the nervous system including in both the nerve ring and nerve cords, as well as in the body-wall and vulval muscle. Expressed broadly in motor neurons. Forms puncta at presynaptic terminals of neurons, muscle excitation sites, and in the dorsal nerve cord.

It is found in the cell membrane. Its subcellular location is the synapse. Its function is as follows. Potassium channel activated by both membrane depolarization or increase in cytosolic Ca(2+) that mediates export of K(+). Its activation dampens the excitatory events that elevate the cytosolic Ca(2+) concentration and/or depolarize the cell membrane. It therefore contributes to repolarization of the membrane potential. Essential for the regulation of neurotransmitter release at synapses. Regulates longevity and age-associated decline in motor activity in mid-late life, by acting in motor neurons and through daf-16 in the intestine. When clustered in neurons, mediates ethanol-induced suppression of locomotory and egg-laying behaviors. The sequence is that of Calcium-activated potassium channel slo-1 from Caenorhabditis elegans.